The sequence spans 539 residues: MVKQLKFSEDARQAMLRGVDQLANAVKVTIGPKGRNVVLDKEFTAPLITNDGVTIAKEIELEDPYENMGAKLVQEVANKTNEIAGDGTTTATVLAQAMIQEGLKNVTSGANPVGLRQGIDKAVKVAVEALHENSQKVENKNEIAQVGAISAADEEIGRYISEATEKVGNDGVITIITIEESNRLNTELELGMQFDRGYQSPYMVTDSDKMVAELERPYILVTDKKISSFQDILPLLEQVVQSNRPILIVADEVEGDALTNIVLNRMRGTFTAVAVKAPGFGDRRKAMLEDLAILTGAQVITDDLGLDLKDASIDMLGTASKVEVTKDNTTVVDGDGDENSIDARVSQLKSQIEETESDFDREKLQERLAKLAGGVAVIKVGAASETELKERKLRIEDALNSTRAAVEEGIVAGGGTALVNVYQKVSENEAEGDIETGVNIVLKALTAPVRQIAENAGLEGSVIVERLKNAEPGVGFNGATNEWVNMLRRGIVDPTKVTRSALQHAASVAAMFLTTEAVVASIPEKNNDQPNMGGMPGMM.

ATP is bound by residues 29-32, 86-90, Gly-414, and Asp-493; these read TIGP and DGTTT.

Belongs to the chaperonin (HSP60) family. Forms a cylinder of 14 subunits composed of two heptameric rings stacked back-to-back. Interacts with the co-chaperonin GroES.

Its subcellular location is the cytoplasm. It catalyses the reaction ATP + H2O + a folded polypeptide = ADP + phosphate + an unfolded polypeptide.. Together with its co-chaperonin GroES, plays an essential role in assisting protein folding. The GroEL-GroES system forms a nano-cage that allows encapsulation of the non-native substrate proteins and provides a physical environment optimized to promote and accelerate protein folding. The chain is Chaperonin GroEL from Staphylococcus aureus.